The following is a 263-amino-acid chain: Genetic interactor of prohibitin 7, mitochondrial (263 aa).

The transit peptide at 1–26 (MSLAMLTRNMLRRTSVRAFASSASNF) directs the protein to the mitochondrion. A helical membrane pass occupies residues 188–204 (VTKTFIYITLFVMLFAI). Positions 232 to 252 (KEQKEKEKEIEEENRKNQEKQ) are disordered.

The protein belongs to the GEP7 family.

It localises to the mitochondrion membrane. In terms of biological role, involved in respiratory growth and required for cell survival in the absence of prohibitins. The polypeptide is Genetic interactor of prohibitin 7, mitochondrial (GEP7) (Clavispora lusitaniae (strain ATCC 42720) (Yeast)).